The sequence spans 975 residues: Exocyst complex component 4 (975 aa).

Ala-2 carries the N-acetylalanine modification. Lys-9 carries the post-translational modification N6-acetyllysine. A Phosphoserine modification is found at Ser-32. A coiled-coil region spans residues Ser-32–Leu-114. Basic and acidic residues predominate over residues Arg-211–Asp-224. Residues Arg-211–Leu-230 are disordered. Residue Ser-226 is modified to Phosphoserine. The residue at position 238 (Thr-238) is a Phosphothreonine. Ser-469 bears the Phosphoserine mark.

This sequence belongs to the SEC8 family. The exocyst complex is composed of EXOC1, EXOC2, EXOC3, EXOC4, EXOC5, EXOC6, EXOC7 and EXOC8. Interacts with BIRC6/bruce. Interacts with MYRIP. Interacts with SH3BP1; required for the localization of both SH3BP1 and the exocyst to the leading edge of migrating cells. Interacts with SLC6A9. As to expression, expressed in the striatum (at protein level).

It localises to the midbody. It is found in the midbody ring. The protein resides in the cell projection. The protein localises to the cytoplasm. Its subcellular location is the cytoskeleton. It localises to the microtubule organizing center. It is found in the centrosome. Component of the exocyst complex involved in the docking of exocytic vesicles with fusion sites on the plasma membrane. This Mus musculus (Mouse) protein is Exocyst complex component 4 (Exoc4).